A 194-amino-acid polypeptide reads, in one-letter code: ATP-dependent Clp protease proteolytic subunit 4 (194 aa).

The active-site Nucleophile is the serine 100. The active site involves histidine 125.

It belongs to the peptidase S14 family. Fourteen ClpP subunits assemble into 2 heptameric rings which stack back to back to give a disk-like structure with a central cavity, resembling the structure of eukaryotic proteasomes.

It localises to the cytoplasm. It catalyses the reaction Hydrolysis of proteins to small peptides in the presence of ATP and magnesium. alpha-casein is the usual test substrate. In the absence of ATP, only oligopeptides shorter than five residues are hydrolyzed (such as succinyl-Leu-Tyr-|-NHMec, and Leu-Tyr-Leu-|-Tyr-Trp, in which cleavage of the -Tyr-|-Leu- and -Tyr-|-Trp bonds also occurs).. Cleaves peptides in various proteins in a process that requires ATP hydrolysis. Has a chymotrypsin-like activity. Plays a major role in the degradation of misfolded proteins. This Rhodococcus jostii (strain RHA1) protein is ATP-dependent Clp protease proteolytic subunit 4.